We begin with the raw amino-acid sequence, 103 residues long: Flagellar hook-basal body complex protein FliE (103 aa).

The protein belongs to the FliE family.

The protein localises to the bacterial flagellum basal body. This Erwinia tasmaniensis (strain DSM 17950 / CFBP 7177 / CIP 109463 / NCPPB 4357 / Et1/99) protein is Flagellar hook-basal body complex protein FliE.